The sequence spans 597 residues: FERM domain-containing protein 3 (597 aa).

One can recognise an FERM domain in the interval 32–312 (MRCTIRLLDD…ENQAFYKYAK (281 aa)). A disordered region spans residues 409–435 (SAPLISSSPVKAAQEYEDPPSEEEDKI). Positions 423 to 432 (EYEDPPSEEE) are enriched in acidic residues. Residues 531-551 (LLVVGLGLLLFVFPLLLLLLE) traverse the membrane as a helical segment.

Its subcellular location is the membrane. Functionally, putative tumor suppressor gene that may be implicated in the origin and progression of lung cancer. The polypeptide is FERM domain-containing protein 3 (FRMD3) (Pongo abelii (Sumatran orangutan)).